The sequence spans 240 residues: Zein-alpha 19C2 (240 aa).

Residues 1-21 (MATKIFSLLMLLALSTCVANA) form the signal peptide.

Belongs to the zein family. Interacts with OP10 (via N-terminus).

Its function is as follows. Zeins are major seed storage proteins. The polypeptide is Zein-alpha 19C2 (Zea mays (Maize)).